Here is a 416-residue protein sequence, read N- to C-terminus: Putative F-box/kelch-repeat protein At1g12870 (416 aa).

The 50-residue stretch at M27 to I76 folds into the F-box domain. Kelch repeat units lie at residues L199–A243 and C297–D341.

The sequence is that of Putative F-box/kelch-repeat protein At1g12870 from Arabidopsis thaliana (Mouse-ear cress).